The primary structure comprises 560 residues: DNA ligase B (560 aa).

Lys-124 (N6-AMP-lysine intermediate) is an active-site residue.

Belongs to the NAD-dependent DNA ligase family. LigB subfamily.

It catalyses the reaction NAD(+) + (deoxyribonucleotide)n-3'-hydroxyl + 5'-phospho-(deoxyribonucleotide)m = (deoxyribonucleotide)n+m + AMP + beta-nicotinamide D-nucleotide.. Functionally, catalyzes the formation of phosphodiester linkages between 5'-phosphoryl and 3'-hydroxyl groups in double-stranded DNA using NAD as a coenzyme and as the energy source for the reaction. In Escherichia coli O9:H4 (strain HS), this protein is DNA ligase B.